Here is a 331-residue protein sequence, read N- to C-terminus: Glyceraldehyde-3-phosphate dehydrogenase, cytosolic (331 aa).

NAD(+) contacts are provided by residues 11 to 12 (RI), Asp-33, and Arg-77. Residues 148-150 (SCT), Thr-179, 208-209 (TG), and Arg-231 contribute to the D-glyceraldehyde 3-phosphate site. The Nucleophile role is filled by Cys-149. Residue Asn-313 coordinates NAD(+).

This sequence belongs to the glyceraldehyde-3-phosphate dehydrogenase family. Homotetramer.

It is found in the cytoplasm. It catalyses the reaction D-glyceraldehyde 3-phosphate + phosphate + NAD(+) = (2R)-3-phospho-glyceroyl phosphate + NADH + H(+). It functions in the pathway carbohydrate degradation; glycolysis; pyruvate from D-glyceraldehyde 3-phosphate: step 1/5. The chain is Glyceraldehyde-3-phosphate dehydrogenase, cytosolic (GAPC) from Leishmania mexicana.